A 218-amino-acid chain; its full sequence is 23 kDa integral membrane protein (218 aa).

Topologically, residues 1-12 are cytoplasmic; that stretch reads MATLGTGMRCLK. A helical membrane pass occupies residues 13–36; sequence SCVFVLNIICLLCSLVLIGAGAYV. Residues 37-55 lie on the Extracellular side of the membrane; that stretch reads EVKFSQYGDNLHKVWQAAP. The chain crosses the membrane as a helical span at residues 56–71; it reads IAIIVVGVIILIVSFL. The Cytoplasmic segment spans residues 72 to 82; it reads GCCGAIKENVC. The chain crosses the membrane as a helical span at residues 83 to 108; the sequence is MLYMYAFFLVVLLIAELAAAIVAVVY. At 109 to 183 the chain is on the extracellular side; sequence KDRIDSEIDA…SVFGAFLKRN (75 aa). Residue Asn-165 is glycosylated (N-linked (GlcNAc...) asparagine). The chain crosses the membrane as a helical span at residues 184–205; that stretch reads LVIVACVAFGVCFFQLLSIVIA. At 206-218 the chain is on the cytoplasmic side; the sequence is CCLGRQIKEYENV.

This sequence belongs to the tetraspanin (TM4SF) family.

It is found in the membrane. This Schistosoma mansoni (Blood fluke) protein is 23 kDa integral membrane protein.